Reading from the N-terminus, the 297-residue chain is HTH-type transcriptional regulator ArgP (297 aa).

One can recognise an HTH lysR-type domain in the interval 4–60 (PDYRTLQALDAVIRERGFERAAQKLCITQSAVSQRIKQLENMFGQPLLVRTVPPRPT). The H-T-H motif DNA-binding region spans 21 to 40 (FERAAQKLCITQSAVSQRIK).

Belongs to the LysR transcriptional regulatory family. In terms of assembly, homodimer.

Its function is as follows. Controls the transcription of genes involved in arginine and lysine metabolism. The sequence is that of HTH-type transcriptional regulator ArgP from Escherichia fergusonii (strain ATCC 35469 / DSM 13698 / CCUG 18766 / IAM 14443 / JCM 21226 / LMG 7866 / NBRC 102419 / NCTC 12128 / CDC 0568-73).